The primary structure comprises 794 residues: DNA ligase (794 aa).

NAD(+) is bound by residues 35-39 (DAEYD), 84-85 (SL), and Glu126. Lys128 acts as the N6-AMP-lysine intermediate in catalysis. NAD(+) is bound by residues Arg149, Glu186, Lys302, and Lys326. Zn(2+)-binding residues include Cys420, Cys423, Cys450, and Cys456. Residues 711–794 (VEGLPLAGQT…KLFDEHGVAR (84 aa)) enclose the BRCT domain.

The protein belongs to the NAD-dependent DNA ligase family. LigA subfamily. Mg(2+) serves as cofactor. Mn(2+) is required as a cofactor.

It carries out the reaction NAD(+) + (deoxyribonucleotide)n-3'-hydroxyl + 5'-phospho-(deoxyribonucleotide)m = (deoxyribonucleotide)n+m + AMP + beta-nicotinamide D-nucleotide.. Its function is as follows. DNA ligase that catalyzes the formation of phosphodiester linkages between 5'-phosphoryl and 3'-hydroxyl groups in double-stranded DNA using NAD as a coenzyme and as the energy source for the reaction. It is essential for DNA replication and repair of damaged DNA. The chain is DNA ligase from Pseudomonas aeruginosa (strain UCBPP-PA14).